Here is a 502-residue protein sequence, read N- to C-terminus: Tyrosine-protein kinase receptor old-1 (502 aa).

A signal peptide spans 1–19 (MKGTLIFVVFYSSYGFAHC). Topologically, residues 20–58 (NTILRSSSLSRNFEDSLRRIPRSTDKDETGFEDSNVQEV) are extracellular. Residues 59–79 (IFILLYCLFVALAILICGLII) traverse the membrane as a helical segment. At 80-502 (FYNSRKRELR…WLSDEKHCDS (423 aa)) the chain is on the cytoplasmic side. Residues 99-140 (LLEPTSADHKRRNSSNIVPPEPTPYPITSGESDLRQTPSRLS) are disordered. Over residues 127-140 (SGESDLRQTPSRLS) the composition is skewed to polar residues. Residues 175-473 (ISKGRPLGSG…ELKTTSNEYF (299 aa)) enclose the Protein kinase domain. ATP contacts are provided by residues 181 to 189 (LGSGEFGII) and K213. The Proton acceptor role is filled by D321.

It belongs to the protein kinase superfamily. Tyr protein kinase family.

It localises to the cell membrane. It catalyses the reaction L-tyrosyl-[protein] + ATP = O-phospho-L-tyrosyl-[protein] + ADP + H(+). Its function is as follows. Receptor tyrosine kinase which plays a role in promoting longevity and resistance to stresses including UV irradiation and high temperatures, probably downstream of daf-16. In Caenorhabditis elegans, this protein is Tyrosine-protein kinase receptor old-1.